A 322-amino-acid polypeptide reads, in one-letter code: MLPAIIFRQVQRPLHHGAATLEHVLGVGGSSFVNCLNRYAAATGFIRISFLDIKRRRNYELARLRLYADEKKQSLHLRTLQGRHLLQGVIERKNFLVDDIREARHKVQERVREKIDEIREERENIMTIPNMLTISRAVLSPYIGYVIVQGDFTLGMSLLAFAGITDLLDGQIARRWPSQASKFGSFLDPMADKLLMGSLVISLCYTDLLPMWLMGIVVFRDVFLLGAGFVIRYISLPPPKTFSRYFDATHVTAQLEPTLLSKINTGVQLATIGLSLGAPIWNYLDHPALQGLWYLTGLTTAATALSYVMNRHNTFKIIQKKT.

Helical transmembrane passes span 143 to 163, 199 to 219, and 289 to 309; these read IGYV…AFAG, LVIS…IVVF, and LQGL…SYVM.

This sequence belongs to the CDP-alcohol phosphatidyltransferase class-I family.

Its subcellular location is the mitochondrion inner membrane. The catalysed reaction is a CDP-1,2-diacyl-sn-glycerol + a 1,2-diacyl-sn-glycero-3-phospho-(1'-sn-glycerol) = a cardiolipin + CMP + H(+). In terms of biological role, catalyzes the synthesis of cardiolipin (CL) (diphosphatidylglycerol) by specifically transferring a phosphatidyl group from CDP-diacylglycerol to phosphatidylglycerol (PG). CL is a key phospholipid in mitochondrial membranes and plays important roles in maintaining the functional integrity and dynamics of mitochondria under both optimal and stress conditions. This Drosophila melanogaster (Fruit fly) protein is Probable cardiolipin synthase (CMP-forming) (CLS).